Reading from the N-terminus, the 457-residue chain is UDP-N-acetylmuramoylalanine--D-glutamate ligase (457 aa).

Position 117 to 123 (Gly-117 to Thr-123) interacts with ATP.

It belongs to the MurCDEF family.

Its subcellular location is the cytoplasm. It catalyses the reaction UDP-N-acetyl-alpha-D-muramoyl-L-alanine + D-glutamate + ATP = UDP-N-acetyl-alpha-D-muramoyl-L-alanyl-D-glutamate + ADP + phosphate + H(+). Its pathway is cell wall biogenesis; peptidoglycan biosynthesis. Cell wall formation. Catalyzes the addition of glutamate to the nucleotide precursor UDP-N-acetylmuramoyl-L-alanine (UMA). This Paramagnetospirillum magneticum (strain ATCC 700264 / AMB-1) (Magnetospirillum magneticum) protein is UDP-N-acetylmuramoylalanine--D-glutamate ligase.